The primary structure comprises 396 residues: Phosphoglycerate kinase (396 aa).

Substrate contacts are provided by residues 21–23 (DFN), R36, 59–62 (HLGK), R119, and R156. ATP is bound by residues K206, G294, E325, and 352–355 (GGDS).

It belongs to the phosphoglycerate kinase family. Monomer.

The protein localises to the cytoplasm. It catalyses the reaction (2R)-3-phosphoglycerate + ATP = (2R)-3-phospho-glyceroyl phosphate + ADP. It functions in the pathway carbohydrate degradation; glycolysis; pyruvate from D-glyceraldehyde 3-phosphate: step 2/5. The sequence is that of Phosphoglycerate kinase from Staphylococcus aureus (strain bovine RF122 / ET3-1).